A 455-amino-acid chain; its full sequence is Angiopoietin-related protein 3 (455 aa).

An N-terminal signal peptide occupies residues 1–16 (MHTIKLFLFVVPLVIA). A sufficient to inhibit LPL lipase activity region spans residues 17 to 165 (SRVDPDLSSF…QEHPEVTSLK (149 aa)). The segment at 17-207 (SRVDPDLSSF…EIEKQLRKTG (191 aa)) is sufficient to inhibit LIPG/EL phospholipase activity. The tract at residues 32-56 (EPKSRFAMLDDVKILANGLLQLGHG) is required for inhibition of LPL lipase activity. Positions 85-206 (LSLRTNEIKE…KEIEKQLRKT (122 aa)) form a coiled coil. N-linked (GlcNAc...) asparagine glycosylation is present at asparagine 115. Positions 202 to 242 (QLRKTGIQEPSENSLSSKSRAPRTTPPLQLNETENTEQDDL) are disordered. Residues 209-220 (QEPSENSLSSKS) are compositionally biased toward polar residues. A glycan (O-linked (GlcNAc) threonine) is linked at threonine 226. Asparagine 232 is a glycosylation site (N-linked (GlcNAc...) asparagine). The Fibrinogen C-terminal domain maps to 237–455 (TEQDDLPADC…SSKMMLQPTT (219 aa)). Cysteines 246 and 274 form a disulfide. N-linked (GlcNAc...) asparagine glycans are attached at residues asparagine 296 and asparagine 357. Cysteines 394 and 408 form a disulfide.

In terms of assembly, interacts with ANGPTL8. Interacts with ITGB3. Post-translationally, in part proteolytically cleaved by proprotein convertases; proposed to be involved in activation. In primary hepatocytes is intracellularily predominantly processed by FURIN and extracellularily by FURIN and PCSK6/PACE4. In 18.5 dpc embryos 75% of protein is found to be processed compared to 25 % in adults. As to expression, predominantly expressed in liver, weakly expressed in kidney and lung. Expressed in podocytes (at protein level). Expressed in hypothalamic neurons (at protein level). Expressed in bone marrow sinusoidal endothelial cells (at protein level).

It is found in the secreted. It localises to the cell projection. Its subcellular location is the lamellipodium. Its function is as follows. Acts in part as a hepatokine that is involved in regulation of lipid and glucose metabolism. Proposed to play a role in the trafficking of energy substrates to either storage or oxidative tissues in response to food intake. Has a stimulatory effect on plasma triglycerides (TG), which is achieved by suppressing plasma TG clearance via inhibition of LPL activity; the function seems to be specific for the feeding conditions. The inhibition of LPL activity appears to be an indirect mechanism involving recruitment of proprotein convertases PCSK6 and FURIN to LPL leading to cleavage and dissociation of LPL from the cell surface; the function does not require ANGPTL3 proteolytic cleavage but seems to be mediated by the N-terminal domain, and is not inhibited by GPIHBP1. Can inhibit endothelial lipase, causing increased plasma levels of high density lipoprotein (HDL) cholesterol and phospholipids; the cleaved N-terminal domain is more efficient than the uncleaved proprotein. Can bind to adipocytes to activate lipolysis, releasing free fatty acids and glycerol. Suppresses LPL specifically in oxidative tissues which is required to route very low density lipoprotein (VLDL)-TG to white adipose tissue (WAT) for storage in response to food; the function may involve cooperation with circulating, liver-derived ANGPTL8 and ANGPTL4 expression in WAT. Contributes to lower plasma levels of low density lipoprotein (LDL)-cholesterol by a mechanism that is independent of the canonical pathway implicating APOE and LDLR. May stimulate hypothalamic LPL activity. Functionally, involved in angiogenesis. Binds to endothelial cells via integrin alpha-V/beta-3 (ITGAV:ITGB3), activates FAK, MAPK and Akt signaling pathways and induces cell adhesion and cell migration. May increase the motility of podocytes. Secreted from podocytes, may modulate properties of glomerular endothelial cells involving integrin alpha-V/beta-3 and Akt signaling. May induce actin filament rearrangements in podocytes implicating integrin alpha-V/beta-3 and Rac1 activation. Binds to hematopoietic stem cells (HSC) and is involved in the regulation of HSC activity probably implicating down-regulation of IKZF1/IKAROS. In Mus musculus (Mouse), this protein is Angiopoietin-related protein 3 (Angptl3).